A 132-amino-acid chain; its full sequence is Small ribosomal subunit protein uS8 (132 aa).

Belongs to the universal ribosomal protein uS8 family. In terms of assembly, part of the 30S ribosomal subunit. Contacts proteins S5 and S12.

Functionally, one of the primary rRNA binding proteins, it binds directly to 16S rRNA central domain where it helps coordinate assembly of the platform of the 30S subunit. This Rickettsia canadensis (strain McKiel) protein is Small ribosomal subunit protein uS8.